The sequence spans 143 residues: Ponticulin (143 aa).

The first 22 residues, 1–22 (MLVLRNLLALVTLALLFTLSSA), serve as a signal peptide directing secretion. A glycan (N-linked (GlcNAc...) asparagine) is linked at Asn111. Ser118 carries the GPI-like-anchor amidated serine lipid modification. The propeptide at 119-143 (SSGSTVMIGLASSLLFAFATLLALF) is removed in mature form.

Belongs to the ponticulin family. Monomer. Disulfide bond(s) stabilize the native, actin-binding conformation of ponticulin. Post-translationally, the GPI-like-anchor contains a phosphoceramide group, rather than a phosphatidyl group.

The protein resides in the cell membrane. Functionally, binds F-actin and nucleates actin assembly. Major high affinity link between the plasma membrane and the cortical actin network. The polypeptide is Ponticulin (ponA) (Dictyostelium discoideum (Social amoeba)).